Consider the following 541-residue polypeptide: Chaperonin GroEL 5 (541 aa).

ATP contacts are provided by residues 30-33 (TLGP), Gly-415, and Asp-496.

Belongs to the chaperonin (HSP60) family. As to quaternary structure, forms a cylinder of 14 subunits composed of two heptameric rings stacked back-to-back. Interacts with the co-chaperonin GroES.

The protein localises to the cytoplasm. The enzyme catalyses ATP + H2O + a folded polypeptide = ADP + phosphate + an unfolded polypeptide.. Together with its co-chaperonin GroES, plays an essential role in assisting protein folding. The GroEL-GroES system forms a nano-cage that allows encapsulation of the non-native substrate proteins and provides a physical environment optimized to promote and accelerate protein folding. This Bradyrhizobium diazoefficiens (strain JCM 10833 / BCRC 13528 / IAM 13628 / NBRC 14792 / USDA 110) protein is Chaperonin GroEL 5.